Reading from the N-terminus, the 95-residue chain is UPF0473 protein GWCH70_2487 (95 aa).

It belongs to the UPF0473 family.

The sequence is that of UPF0473 protein GWCH70_2487 from Geobacillus sp. (strain WCH70).